Here is a 106-residue protein sequence, read N- to C-terminus: Toxin-like structure LSTX-D4 (106 aa).

An N-terminal signal peptide occupies residues 1 to 20 (MMKVLVVVALLVTLISYSSS). A propeptide spanning residues 21–41 (EGIGDLEADELLSLMANEQTR) is cleaved from the precursor. Cystine bridges form between Cys45/Cys60, Cys52/Cys69, Cys59/Cys85, and Cys71/Cys83.

This sequence belongs to the neurotoxin 19 (CSTX) family. 02 (D7) subfamily. In terms of tissue distribution, expressed by the venom gland.

It is found in the secreted. The polypeptide is Toxin-like structure LSTX-D4 (Lycosa singoriensis (Wolf spider)).